A 118-amino-acid chain; its full sequence is Putative pterin-4-alpha-carbinolamine dehydratase (118 aa).

The protein belongs to the pterin-4-alpha-carbinolamine dehydratase family.

The catalysed reaction is (4aS,6R)-4a-hydroxy-L-erythro-5,6,7,8-tetrahydrobiopterin = (6R)-L-erythro-6,7-dihydrobiopterin + H2O. This Pseudomonas savastanoi pv. phaseolicola (strain 1448A / Race 6) (Pseudomonas syringae pv. phaseolicola (strain 1448A / Race 6)) protein is Putative pterin-4-alpha-carbinolamine dehydratase.